The sequence spans 162 residues: Disulfide bond formation protein B (162 aa).

Residues Met1–Ala8 are Cytoplasmic-facing. Residues Val9–Ala25 traverse the membrane as a helical segment. At Ala26 to Leu43 the chain is on the periplasmic side. Cys35 and Cys38 form a disulfide bridge. A helical transmembrane segment spans residues Cys44 to Pro60. Residues Arg61–Leu67 are Cytoplasmic-facing. Residues Phe68 to Ala85 traverse the membrane as a helical segment. The Periplasmic segment spans residues Tyr86–Val141. A disulfide bond links Cys101 and Cys128. Residues Trp142–Arg160 form a helical membrane-spanning segment. Residues Ala161–Lys162 are Cytoplasmic-facing.

This sequence belongs to the DsbB family.

It localises to the cell inner membrane. Required for disulfide bond formation in some periplasmic proteins. Acts by oxidizing the DsbA protein. The chain is Disulfide bond formation protein B from Neisseria meningitidis serogroup A / serotype 4A (strain DSM 15465 / Z2491).